The chain runs to 296 residues: Arginine/serine-rich protein 1 (296 aa).

Residues 1 to 131 (MSNYVNDMWP…RSRSRSRERS (131 aa)) form a disordered region. At S12 the chain carries Phosphoserine. The span at 20 to 31 (SASRSGGSSRLS) shows a compositional bias: low complexity. The segment covering 32 to 125 (SRSRSRSFSR…RSRSRSRSRS (94 aa)) has biased composition (basic residues). 2 positions are modified to phosphoserine: S111 and S113. R141 is modified (omega-N-methylarginine). Over residues 156–165 (ERSRWRDRSR) the composition is skewed to basic and acidic residues. Disordered regions lie at residues 156-175 (ERSR…TPFR) and 217-296 (SHGI…WIPV). Over residues 245 to 261 (EKPSQQRSIAFSSNNSV) the composition is skewed to polar residues. Basic and acidic residues predominate over residues 272–287 (ATEETSSRSPKIDKKK). A Phosphoserine modification is found at S280.

This sequence belongs to the RSRP family. In terms of processing, phosphorylated. Phosphorylation at Ser-111 and Ser-113 mediates the interaction with spliceosome proteins.

Its subcellular location is the nucleus. In terms of biological role, probably acts as a spliceosomal factor that contributes to spliceosome assembly and regulates the isoform switching of proteins such as PARP6. The chain is Arginine/serine-rich protein 1 (RSRP1) from Macaca fascicularis (Crab-eating macaque).